The following is a 226-amino-acid chain: MMLHIPEVLTAAQVVEIRKTIDTAEWVDGKATVGAQGAKVKRNRQLPELSATGLKVGQEILKALAGHPLFVSAALPMRYMPPLFNRYEGGEHYGFHVDGSVRSIPGSNLSLRTDLSCTLFLSEPEEYEGGELVVADTYGEHAVKLPAGDMILYPASSVHKVEPVTHGARISSFFWVQSMVADDGKRGLLFELDQNIQKLRARLGDCEEIIGLTGHYHNLLRQWAMV.

The region spanning 78-178 is the Fe2OG dioxygenase domain; the sequence is RYMPPLFNRY…RISSFFWVQS (101 aa). Fe cation-binding residues include histidine 96, aspartate 98, and histidine 159. Residue arginine 169 coordinates 2-oxoglutarate.

It depends on Fe(2+) as a cofactor. L-ascorbate is required as a cofactor.

The sequence is that of PKHD-type hydroxylase mma_3618 from Janthinobacterium sp. (strain Marseille) (Minibacterium massiliensis).